The following is an 87-amino-acid chain: Kappa-5-bungarotoxin (87 aa).

Residues 1–21 (MKTLLLTLVVVTIVCLDLGYT) form the signal peptide. Intrachain disulfides connect cysteine 24–cysteine 42, cysteine 35–cysteine 63, cysteine 48–cysteine 52, cysteine 67–cysteine 79, and cysteine 80–cysteine 85.

This sequence belongs to the three-finger toxin family. Long-chain subfamily. Kappa-neurotoxin sub-subfamily. As to quaternary structure, homo- and heterodimer; non-covalently linked. As to expression, expressed by the venom gland.

The protein resides in the secreted. Its function is as follows. Postsynaptic neurotoxin that binds and inhibits neuronal nicotinic acetylcholine receptors (nAChR) with high affinity (IC(50)&lt;100 nM). Is a selective, and slowly reversible antagonist of alpha-3/CHRNA3-containing and some alpha-4/CHRNA4-containing AChRs. The protein is Kappa-5-bungarotoxin of Bungarus multicinctus (Many-banded krait).